A 500-amino-acid polypeptide reads, in one-letter code: Chromosomal replication initiator protein DnaA (500 aa).

Residues 1–37 (MSDTPFGDADHPRPAPIHPDAVLPPPMSSQSADNDPT) are disordered. The interval 1-103 (MSDTPFGDAD…EELLSDHFHK (103 aa)) is domain I, interacts with DnaA modulators. Residues 14–27 (PAPIHPDAVLPPPM) are compositionally biased toward pro residues. The segment at 103–161 (KAIHLAITIDPDLELALGAPDHEDEEEEVPPAQFVPKVTVGVTEPSARPTTTIDDDEGN) is domain II. Residues 162-378 (RLNPKYTFDS…GALIRVTAFA (217 aa)) are domain III, AAA+ region. ATP is bound by residues glycine 206, glycine 208, lysine 209, and threonine 210. Residues 379–500 (SLNQQPVDIS…SEITNRIKQY (122 aa)) form a domain IV, binds dsDNA region.

It belongs to the DnaA family. Oligomerizes as a right-handed, spiral filament on DNA at oriC.

Its subcellular location is the cytoplasm. In terms of biological role, plays an essential role in the initiation and regulation of chromosomal replication. ATP-DnaA binds to the origin of replication (oriC) to initiate formation of the DNA replication initiation complex once per cell cycle. Binds the DnaA box (a 9 base pair repeat at the origin) and separates the double-stranded (ds)DNA. Forms a right-handed helical filament on oriC DNA; dsDNA binds to the exterior of the filament while single-stranded (ss)DNA is stabiized in the filament's interior. The ATP-DnaA-oriC complex binds and stabilizes one strand of the AT-rich DNA unwinding element (DUE), permitting loading of DNA polymerase. After initiation quickly degrades to an ADP-DnaA complex that is not apt for DNA replication. Binds acidic phospholipids. In Cutibacterium acnes (strain DSM 16379 / KPA171202) (Propionibacterium acnes), this protein is Chromosomal replication initiator protein DnaA.